An 871-amino-acid polypeptide reads, in one-letter code: Rho guanine nucleotide exchange factor 26 (871 aa).

Disordered regions lie at residues 1–49 (MDGE…LLIT), 86–233 (AQRR…NPSV), and 288–310 (PLGHAGEESEVDNDVDSPGSLRR). A Phosphoserine modification is found at S22. A compositionally biased stretch (pro residues) spans 136-156 (PAPPPPPVLRPPRTPNAPAPC). Residues 173 to 192 (PTANGLAANNDSPGSGSQSG) show a composition bias toward polar residues. Phosphoserine is present on S392. A DH domain is found at 439 to 623 (KRQEAIFEVI…SKLVRLCNEG (185 aa)). In terms of domain architecture, PH spans 655-782 (WLVKRGELTA…WITALGHSSG (128 aa)). The SH3 domain maps to 789–850 (TSLTQVEIVR…PMECAKEITC (62 aa)).

In terms of assembly, interacts with ICAM1 and RHOG. As to expression, isoform 1 is broadly expressed, with highest levels in liver (at protein level). Certain mRNA species appear to be specifically expressed in prostate and liver.

The protein localises to the cell projection. It is found in the ruffle. Its function is as follows. Activates RhoG GTPase by promoting the exchange of GDP by GTP. Required for the formation of membrane ruffles during macropinocytosis. Required for the formation of cup-like structures during trans-endothelial migration of leukocytes. In case of Salmonella enterica infection, activated by SopB, which induces cytoskeleton rearrangements and promotes bacterial entry. The polypeptide is Rho guanine nucleotide exchange factor 26 (ARHGEF26) (Homo sapiens (Human)).